A 366-amino-acid chain; its full sequence is Lysophosphatidic acid receptor 1-A (366 aa).

Over 1–52 (MASLSEFVSEPISMMSQTSAASESQCYYNETIAFFYNRSGKYLATEWNAVSK) the chain is Extracellular. 2 disulfide bridges follow: Cys26-Cys192 and Cys190-Cys197. Residues Asn29 and Asn37 are each glycosylated (N-linked (GlcNAc...) asparagine). Position 41 (Lys41) interacts with a 1-acyl-sn-glycero-3-phosphate. A helical membrane pass occupies residues 53–77 (LVMGLGITVCIFIMLANLLVMVAIY). The Cytoplasmic portion of the chain corresponds to 78–85 (VNRRFHFP). The chain crosses the membrane as a helical span at residues 86-109 (IYYLMANLAAADFFAGLAYFYLMF). At 110 to 123 (NTGPNTRRLTVSTW) the chain is on the extracellular side. A helical membrane pass occupies residues 124–146 (LLRQGLIDTSLTASVANLLAIAI). 126–131 (RQGLID) provides a ligand contact to a 1-acyl-sn-glycero-3-phosphate. Over 147 to 165 (ERHITVFRMQLHTRMSNRR) the chain is Cytoplasmic. Residues 166–186 (VVVVIVVIWTVAIVMGAIPSV) traverse the membrane as a helical segment. At 187-206 (GWNCICDLEQCSNMAPLYSD) the chain is on the extracellular side. The chain crosses the membrane as a helical span at residues 207-227 (SYLIFWTIFNLVTFVVMVVLY). Trp212 lines the a 1-acyl-sn-glycero-3-phosphate pocket. Topologically, residues 228 to 257 (AHIFVYVRQKTMRMSRHSSGPRRNRDTMMS) are cytoplasmic. A helical transmembrane segment spans residues 258–282 (LLKTVVIVLGAFIVCWTPGLVLLLL). Topologically, residues 283-296 (DICCPQCNILAYEK) are extracellular. Cysteines 286 and 289 form a disulfide. The helical transmembrane segment at 297 to 317 (FFLLLAEFNSAMNPIIYSYRD) threads the bilayer. Residues 318-366 (KEMSATFKQILCCQRTENVNGPTEGSDRSASSLNHTILAGVHSNDHSVV) lie on the Cytoplasmic side of the membrane.

Belongs to the G-protein coupled receptor 1 family. In terms of tissue distribution, expressed at high levels in oocytes and at lower levels in brain and spinal cord. Below detection level in lung, heart, kidney, liver, muscle, stomach, and intestine.

Its subcellular location is the cell surface. The protein resides in the cell membrane. It localises to the endosome. Its function is as follows. Receptor for lysophosphatidic acid (LPA). Plays a role in the reorganization of the actin cytoskeleton, cell migration, differentiation and proliferation, and thereby contributes to the responses to tissue damage and infectious agents. Activates downstream signaling cascades via the G(i)/G(o), G(12)/G(13), and G(q) families of heteromeric G proteins. Signaling inhibits adenylyl cyclase activity and decreases cellular cAMP levels. Signaling triggers an increase of cytoplasmic Ca(2+) levels. Signaling leads to the activation of phospholipase C (PLC) and the formation of inositol 1,4,5-trisphosphate. Signaling mediates activation of down-stream MAP kinases. Contributes to the regulation of cell shape. Promotes Rho-dependent reorganization of the actin cytoskeleton in neuronal cells and neurite retraction. Promotes the activation of Rho and the formation of actin stress fibers. Promotes formation of lamellipodia at the leading edge of migrating cells via activation of Rac. Through its function as lysophosphatidic acid receptor, plays a role in chemotaxis and cell migration, including responses to injury and wounding. Promotes cell proliferation in response to lysophosphatidic acid. The polypeptide is Lysophosphatidic acid receptor 1-A (lpar1-a) (Xenopus laevis (African clawed frog)).